A 180-amino-acid chain; its full sequence is ATP synthase subunit delta (180 aa).

This sequence belongs to the ATPase delta chain family. In terms of assembly, F-type ATPases have 2 components, F(1) - the catalytic core - and F(0) - the membrane proton channel. F(1) has five subunits: alpha(3), beta(3), gamma(1), delta(1), epsilon(1). CF(0) has four main subunits: a(1), b(1), b'(1) and c(10-14). The alpha and beta chains form an alternating ring which encloses part of the gamma chain. F(1) is attached to F(0) by a central stalk formed by the gamma and epsilon chains, while a peripheral stalk is formed by the delta, b and b' chains.

The protein localises to the cellular thylakoid membrane. In terms of biological role, f(1)F(0) ATP synthase produces ATP from ADP in the presence of a proton or sodium gradient. F-type ATPases consist of two structural domains, F(1) containing the extramembraneous catalytic core and F(0) containing the membrane proton channel, linked together by a central stalk and a peripheral stalk. During catalysis, ATP synthesis in the catalytic domain of F(1) is coupled via a rotary mechanism of the central stalk subunits to proton translocation. Its function is as follows. This protein is part of the stalk that links CF(0) to CF(1). It either transmits conformational changes from CF(0) to CF(1) or is implicated in proton conduction. In Prochlorococcus marinus (strain MIT 9312), this protein is ATP synthase subunit delta.